A 100-amino-acid polypeptide reads, in one-letter code: Small ribosomal subunit protein uS14c (100 aa).

Belongs to the universal ribosomal protein uS14 family. In terms of assembly, part of the 30S ribosomal subunit.

The protein resides in the plastid. Its subcellular location is the chloroplast. Its function is as follows. Binds 16S rRNA, required for the assembly of 30S particles. In Vitis vinifera (Grape), this protein is Small ribosomal subunit protein uS14c.